Reading from the N-terminus, the 340-residue chain is DNA-directed RNA polymerase subunit alpha (340 aa).

The tract at residues 1 to 233 (MIRDEISVST…DLFIPFLRAE (233 aa)) is alpha N-terminal domain (alpha-NTD). Positions 268-340 (AFKHIFIDQS…DLPKNKFQIH (73 aa)) are alpha C-terminal domain (alpha-CTD).

This sequence belongs to the RNA polymerase alpha chain family. In terms of assembly, in plastids the minimal PEP RNA polymerase catalytic core is composed of four subunits: alpha, beta, beta', and beta''. When a (nuclear-encoded) sigma factor is associated with the core the holoenzyme is formed, which can initiate transcription.

The protein resides in the plastid. The protein localises to the chloroplast. The catalysed reaction is RNA(n) + a ribonucleoside 5'-triphosphate = RNA(n+1) + diphosphate. Functionally, DNA-dependent RNA polymerase catalyzes the transcription of DNA into RNA using the four ribonucleoside triphosphates as substrates. The sequence is that of DNA-directed RNA polymerase subunit alpha from Cycas taitungensis (Prince sago).